The following is a 158-amino-acid chain: Transcription elongation factor GreA (158 aa).

The protein belongs to the GreA/GreB family.

In terms of biological role, necessary for efficient RNA polymerase transcription elongation past template-encoded arresting sites. The arresting sites in DNA have the property of trapping a certain fraction of elongating RNA polymerases that pass through, resulting in locked ternary complexes. Cleavage of the nascent transcript by cleavage factors such as GreA or GreB allows the resumption of elongation from the new 3'terminus. GreA releases sequences of 2 to 3 nucleotides. The sequence is that of Transcription elongation factor GreA from Hamiltonella defensa subsp. Acyrthosiphon pisum (strain 5AT).